The primary structure comprises 630 residues: Plastin-1 (630 aa).

The segment at 1–114 (MENNVTTISR…LGGTSSISTE (114 aa)) is fimbrin headpiece. EF-hand domains are found at residues 11 to 46 (EELE…ASLP) and 51 to 86 (KVRE…LKSK). Ca(2+)-binding residues include Asp24, Asp26, Ser28, Tyr30, Glu35, Asp64, Asn66, Asp68, Lys70, and Glu75. 2 actin-binding regions span residues 108–375 (TSSI…LFNT) and 376–624 (YPAL…LMGR). Residues 115–630 (GTQHSYSEEE…LMGRGLNKIK (516 aa)) form a fimbrin core region. 4 consecutive Calponin-homology (CH) domains span residues 122–238 (EEEK…KVGL), 266–377 (LSPE…NTYP), 396–505 (SNEE…RRYT), and 517–626 (KVND…GRGL).

As to quaternary structure, monomer. The N-terminus is blocked.

The protein resides in the cytoplasm. It localises to the cell projection. Its subcellular location is the stereocilium. Functionally, actin-bundling protein. In the inner ear, it is required for stereocilia formation. Mediates liquid packing of actin filaments that is necessary for stereocilia to grow to their proper dimensions. In Gallus gallus (Chicken), this protein is Plastin-1 (PLS1).